A 358-amino-acid chain; its full sequence is Carbamoyl phosphate synthase small chain (358 aa).

CPSase regions lie at residues 1–168 (MYNR…PALG) and 1–171 (MYNR…GRGR). Residues S46, G220, and G222 each contribute to the L-glutamine site. The 187-residue stretch at 172–358 (RVVLVDLGMK…FIKNIDNNMK (187 aa)) folds into the Glutamine amidotransferase type-1 domain. C247 functions as the Nucleophile in the catalytic mechanism. L-glutamine contacts are provided by M248, Q251, N289, G291, and Y292. Catalysis depends on residues H332 and E334.

It belongs to the CarA family. In terms of assembly, composed of two chains; the small (or glutamine) chain promotes the hydrolysis of glutamine to ammonia, which is used by the large (or ammonia) chain to synthesize carbamoyl phosphate. Tetramer of heterodimers (alpha,beta)4.

It catalyses the reaction hydrogencarbonate + L-glutamine + 2 ATP + H2O = carbamoyl phosphate + L-glutamate + 2 ADP + phosphate + 2 H(+). The catalysed reaction is L-glutamine + H2O = L-glutamate + NH4(+). It functions in the pathway amino-acid biosynthesis; L-arginine biosynthesis; carbamoyl phosphate from bicarbonate: step 1/1. The protein operates within pyrimidine metabolism; UMP biosynthesis via de novo pathway; (S)-dihydroorotate from bicarbonate: step 1/3. Small subunit of the glutamine-dependent carbamoyl phosphate synthetase (CPSase). CPSase catalyzes the formation of carbamoyl phosphate from the ammonia moiety of glutamine, carbonate, and phosphate donated by ATP, constituting the first step of 2 biosynthetic pathways, one leading to arginine and/or urea and the other to pyrimidine nucleotides. The small subunit (glutamine amidotransferase) binds and cleaves glutamine to supply the large subunit with the substrate ammonia. The polypeptide is Carbamoyl phosphate synthase small chain (Fusobacterium nucleatum subsp. nucleatum (strain ATCC 25586 / DSM 15643 / BCRC 10681 / CIP 101130 / JCM 8532 / KCTC 2640 / LMG 13131 / VPI 4355)).